The chain runs to 484 residues: Adenylosuccinate lyase (484 aa).

A2 is subject to N-acetylalanine. Substrate is bound by residues R20–Y21, R85–D87, and T111–S112. K147 is modified (N6-acetyllysine). Residue H159 is the Proton donor/acceptor of the active site. Q241 is a binding site for substrate. S289 (proton donor/acceptor) is an active-site residue. K295 carries the post-translational modification N6-acetyllysine. Residues R303, R329, S334, and R338 each contribute to the substrate site. A Glycyl lysine isopeptide (Lys-Gly) (interchain with G-Cter in SUMO1) cross-link involves residue K415.

Belongs to the lyase 1 family. Adenylosuccinate lyase subfamily. In terms of assembly, homotetramer. Residues from neighboring subunits contribute catalytic and substrate-binding residues to each active site. As to expression, ubiquitously expressed. Both isoforms are produced by all tissues. Isoform 2 is 10-fold less abundant than isoform 1.

It catalyses the reaction N(6)-(1,2-dicarboxyethyl)-AMP = fumarate + AMP. The enzyme catalyses (2S)-2-[5-amino-1-(5-phospho-beta-D-ribosyl)imidazole-4-carboxamido]succinate = 5-amino-1-(5-phospho-beta-D-ribosyl)imidazole-4-carboxamide + fumarate. Its pathway is purine metabolism; AMP biosynthesis via de novo pathway; AMP from IMP: step 2/2. The protein operates within purine metabolism; IMP biosynthesis via de novo pathway; 5-amino-1-(5-phospho-D-ribosyl)imidazole-4-carboxamide from 5-amino-1-(5-phospho-D-ribosyl)imidazole-4-carboxylate: step 2/2. The enzyme reaction kinetics indicate cooperativity between subunits. Its function is as follows. Catalyzes two non-sequential steps in de novo AMP synthesis: converts (S)-2-(5-amino-1-(5-phospho-D-ribosyl)imidazole-4-carboxamido)succinate (SAICAR) to fumarate plus 5-amino-1-(5-phospho-D-ribosyl)imidazole-4-carboxamide, and thereby also contributes to de novo IMP synthesis, and converts succinyladenosine monophosphate (SAMP) to AMP and fumarate. This is Adenylosuccinate lyase (ADSL) from Homo sapiens (Human).